The chain runs to 528 residues: GMP synthase [glutamine-hydrolyzing] (528 aa).

Residues 13 to 204 (SIVILDFGSQ…VHNICRSKPD (192 aa)) form the Glutamine amidotransferase type-1 domain. Cys-90 acts as the Nucleophile in catalysis. Active-site residues include His-178 and Glu-180. The region spanning 205–403 (WTTNTFIDEA…LGLPEEIVNR (199 aa)) is the GMPS ATP-PPase domain. 232–238 (SGGVDSS) serves as a coordination point for ATP.

As to quaternary structure, homodimer.

It catalyses the reaction XMP + L-glutamine + ATP + H2O = GMP + L-glutamate + AMP + diphosphate + 2 H(+). The protein operates within purine metabolism; GMP biosynthesis; GMP from XMP (L-Gln route): step 1/1. In terms of biological role, catalyzes the synthesis of GMP from XMP. This chain is GMP synthase [glutamine-hydrolyzing], found in Prochlorococcus marinus (strain SARG / CCMP1375 / SS120).